The following is a 74-amino-acid chain: Delta-stichotoxin-Sgt2a (74 aa).

The first 19 residues, 1–19, serve as a signal peptide directing secretion; the sequence is MNRLIILVFAAVFLTLASA. The propeptide occupies 20-28; sequence EVSEDVNMA. Cystine bridges form between Cys-34–Cys-71, Cys-36–Cys-64, and Cys-57–Cys-72.

Belongs to the sea anemone sodium channel inhibitory toxin family. Type I subfamily.

Its subcellular location is the secreted. It is found in the nematocyst. Binds specifically to voltage-gated sodium channels (Nav), thereby delaying their inactivation during signal transduction. This Stichodactyla gigantea (Giant carpet anemone) protein is Delta-stichotoxin-Sgt2a.